The following is a 234-amino-acid chain: uncharacterized protein (234 aa).

A helical transmembrane segment spans residues 13 to 32 (KSINYYIFFFQYTLVYNTIQ). 2 disordered regions span residues 102–130 (HSKTTSLPFSSSSPQSSSSSSSSSSSSNS) and 159–185 (ESDSKSDSEFDSESNSDFDSESESEYE). A compositionally biased stretch (low complexity) spans 103 to 130 (SKTTSLPFSSSSPQSSSSSSSSSSSSNS). Residues 167–185 (EFDSESNSDFDSESESEYE) show a composition bias toward acidic residues.

Its subcellular location is the membrane. This is an uncharacterized protein from Dictyostelium discoideum (Social amoeba).